The sequence spans 360 residues: Lipid-A-disaccharide synthase (360 aa).

This sequence belongs to the LpxB family.

The catalysed reaction is a lipid X + a UDP-2-N,3-O-bis[(3R)-3-hydroxyacyl]-alpha-D-glucosamine = a lipid A disaccharide + UDP + H(+). The protein operates within bacterial outer membrane biogenesis; LPS lipid A biosynthesis. Condensation of UDP-2,3-diacylglucosamine and 2,3-diacylglucosamine-1-phosphate to form lipid A disaccharide, a precursor of lipid A, a phosphorylated glycolipid that anchors the lipopolysaccharide to the outer membrane of the cell. This is Lipid-A-disaccharide synthase from Helicobacter pylori (strain P12).